Reading from the N-terminus, the 282-residue chain is Pantothenate synthetase (282 aa).

30-37 (MGALHQGH) is an ATP binding site. His37 serves as the catalytic Proton donor. Gln61 is a binding site for (R)-pantoate. A beta-alanine-binding site is contributed by Gln61. 149–152 (GEKD) lines the ATP pocket. Gln155 is a (R)-pantoate binding site. ATP is bound by residues Leu178 and 186-189 (MSSR).

The protein belongs to the pantothenate synthetase family. Homodimer.

It is found in the cytoplasm. It carries out the reaction (R)-pantoate + beta-alanine + ATP = (R)-pantothenate + AMP + diphosphate + H(+). It participates in cofactor biosynthesis; (R)-pantothenate biosynthesis; (R)-pantothenate from (R)-pantoate and beta-alanine: step 1/1. Its function is as follows. Catalyzes the condensation of pantoate with beta-alanine in an ATP-dependent reaction via a pantoyl-adenylate intermediate. The sequence is that of Pantothenate synthetase from Flavobacterium psychrophilum (strain ATCC 49511 / DSM 21280 / CIP 103535 / JIP02/86).